Here is a 169-residue protein sequence, read N- to C-terminus: MQIETLTVEPLTKEAFAPFGDVIEVEGAQLRLINNGTTERYHDLARVEAAGTQTRVLINIFRGQSFAAPIDIMMMERHPFGSQAFIPLNGRPFLVVVAEDAGAGPARPRAFLARGDQGVNYLRNIWHHPLLALEQKSDFLVVDRAGREDNLEEYFFSDYAYRIETTQTA.

Belongs to the ureidoglycolate lyase family. Homodimer. Ni(2+) is required as a cofactor.

It carries out the reaction (S)-ureidoglycolate = urea + glyoxylate. It functions in the pathway nitrogen metabolism; (S)-allantoin degradation. Catalyzes the catabolism of the allantoin degradation intermediate (S)-ureidoglycolate, generating urea and glyoxylate. Involved in the utilization of allantoin as nitrogen source. This Brucella ovis (strain ATCC 25840 / 63/290 / NCTC 10512) protein is Ureidoglycolate lyase.